The following is a 329-amino-acid chain: Glycerol-3-phosphate dehydrogenase [NAD(P)+] (329 aa).

Residues S13, W14, H34, and K105 each contribute to the NADPH site. K105, G134, and S136 together coordinate sn-glycerol 3-phosphate. A138 serves as a coordination point for NADPH. Sn-glycerol 3-phosphate is bound by residues K189, D242, S252, R253, and N254. K189 acts as the Proton acceptor in catalysis. An NADPH-binding site is contributed by R253. Residues V277 and E279 each coordinate NADPH.

Belongs to the NAD-dependent glycerol-3-phosphate dehydrogenase family.

The protein resides in the cytoplasm. It catalyses the reaction sn-glycerol 3-phosphate + NAD(+) = dihydroxyacetone phosphate + NADH + H(+). The catalysed reaction is sn-glycerol 3-phosphate + NADP(+) = dihydroxyacetone phosphate + NADPH + H(+). The protein operates within membrane lipid metabolism; glycerophospholipid metabolism. Its function is as follows. Catalyzes the reduction of the glycolytic intermediate dihydroxyacetone phosphate (DHAP) to sn-glycerol 3-phosphate (G3P), the key precursor for phospholipid synthesis. The polypeptide is Glycerol-3-phosphate dehydrogenase [NAD(P)+] (Legionella pneumophila (strain Corby)).